A 307-amino-acid polypeptide reads, in one-letter code: Protoheme IX farnesyltransferase (307 aa).

9 helical membrane passes run 31–51 (VTQL…PGMV), 55–75 (VLIG…AINC), 103–123 (TLVF…VYAN), 125–145 (LTMW…TILL), 153–173 (IVIG…AVAG), 179–199 (AWFL…ALAL), 223–243 (LLHI…PFVY), 246–266 (SGYI…AYAW), and 285–305 (ILYL…KFVP).

Belongs to the UbiA prenyltransferase family. Protoheme IX farnesyltransferase subfamily.

The protein localises to the cell inner membrane. It carries out the reaction heme b + (2E,6E)-farnesyl diphosphate + H2O = Fe(II)-heme o + diphosphate. It participates in porphyrin-containing compound metabolism; heme O biosynthesis; heme O from protoheme: step 1/1. Its function is as follows. Converts heme B (protoheme IX) to heme O by substitution of the vinyl group on carbon 2 of heme B porphyrin ring with a hydroxyethyl farnesyl side group. In Cupriavidus necator (strain ATCC 17699 / DSM 428 / KCTC 22496 / NCIMB 10442 / H16 / Stanier 337) (Ralstonia eutropha), this protein is Protoheme IX farnesyltransferase.